We begin with the raw amino-acid sequence, 187 residues long: MTDSSNEHETENPSLPIPDNEIQDLQQEIATLKAELKEKNDKYLMVLAESENARKRMQKERQEMMQYAVENALIDFLVPIESMEKALGFASQMSDEVKNWALGFNMILQQFKQVFEEKGIVEYSSVGQKFNPFLHEAVETEETTKVPEGTIVEEFSKGYKIGERPIRVAKVKVAKAPAPQEKEEVEK.

Basic and acidic residues predominate over residues 1–11 (MTDSSNEHETE). Positions 1–21 (MTDSSNEHETENPSLPIPDNE) are disordered.

Belongs to the GrpE family. Homodimer.

The protein localises to the cytoplasm. Its function is as follows. Participates actively in the response to hyperosmotic and heat shock by preventing the aggregation of stress-denatured proteins, in association with DnaK and GrpE. It is the nucleotide exchange factor for DnaK and may function as a thermosensor. Unfolded proteins bind initially to DnaJ; upon interaction with the DnaJ-bound protein, DnaK hydrolyzes its bound ATP, resulting in the formation of a stable complex. GrpE releases ADP from DnaK; ATP binding to DnaK triggers the release of the substrate protein, thus completing the reaction cycle. Several rounds of ATP-dependent interactions between DnaJ, DnaK and GrpE are required for fully efficient folding. In Chlamydia caviae (strain ATCC VR-813 / DSM 19441 / 03DC25 / GPIC) (Chlamydophila caviae), this protein is Protein GrpE.